The sequence spans 448 residues: Mitochondrial distribution and morphology protein 10 (448 aa).

Belongs to the MDM10 family. In terms of assembly, component of the ER-mitochondria encounter structure (ERMES) or MDM complex, composed of MMM1, MDM10, MDM12 and MDM34. Associates with the mitochondrial outer membrane sorting assembly machinery SAM(core) complex.

Its subcellular location is the mitochondrion outer membrane. Functionally, component of the ERMES/MDM complex, which serves as a molecular tether to connect the endoplasmic reticulum and mitochondria. Components of this complex are involved in the control of mitochondrial shape and protein biogenesis and may function in phospholipid exchange. MDM10 is involved in the late assembly steps of the general translocase of the mitochondrial outer membrane (TOM complex). Functions in the TOM40-specific route of the assembly of outer membrane beta-barrel proteins, including the association of TOM40 with the receptor TOM22 and small TOM proteins. Can associate with the SAM(core) complex as well as the MDM12-MMM1 complex, both involved in late steps of the major beta-barrel assembly pathway, that is responsible for biogenesis of all outer membrane beta-barrel proteins. May act as a switch that shuttles between both complexes and channels precursor proteins into the TOM40-specific pathway. Plays a role in mitochondrial morphology and in the inheritance of mitochondria. The polypeptide is Mitochondrial distribution and morphology protein 10 (Podospora anserina (strain S / ATCC MYA-4624 / DSM 980 / FGSC 10383) (Pleurage anserina)).